The chain runs to 37 residues: uncharacterized protein (37 aa).

Positions 1 to 23 are cleaved as a signal peptide; it reads MLNFSLCLYPVFILNKLVLRTQS.

It belongs to the orthopoxviruses VACWR204.5 protein family.

This is an uncharacterized protein from Vaccinia virus (strain Western Reserve) (VACV).